Reading from the N-terminus, the 384-residue chain is MKVTSLDGRRLRKMLRKEAEARCVVLDCRPYLAFAASSVRGSLNVNLNSVVLRRARGGAVSARYVLADEAARARLLQEGGGGVAAVVVLDQGSRHWQKLREESAARVVLTSLLACLSAGPRVYFLKGGYETFYSQYPECCVDAKPISQEKLEGERGLLSQCGKPILSVAYRPAYDQGGPVEILPFLYLGSAYHASKCEFLANLHITALLNVSRRTSEACTTHLHYKWIPVEDSHTADISSHFQEAIDFIDCVREEGGKVLVHCEAGVSRSPTICMAYLMKTKQFRLKEAFEYIKQRRSVVSPNFGFMGQLLQYESEILPSTPTPQPPSCQGEAASSTFIGHLQTLSPDMQGAYCTFPTSVLAPVPTHATVAELHRSPVATATSC.

The Rhodanese domain occupies 19–141; that stretch reads AEARCVVLDC…FYSQYPECCV (123 aa). The short motif at 53–74 is the Nuclear localization signal element; the sequence is RRARGGAVSARYVLADEAARAR. Residues 178 to 319 enclose the Tyrosine-protein phosphatase domain; the sequence is GPVEILPFLY…LLQYESEILP (142 aa). The active-site Phosphocysteine intermediate is Cys263.

Belongs to the protein-tyrosine phosphatase family. Non-receptor class dual specificity subfamily.

The protein localises to the nucleus. The enzyme catalyses O-phospho-L-tyrosyl-[protein] + H2O = L-tyrosyl-[protein] + phosphate. The catalysed reaction is O-phospho-L-seryl-[protein] + H2O = L-seryl-[protein] + phosphate. It carries out the reaction O-phospho-L-threonyl-[protein] + H2O = L-threonyl-[protein] + phosphate. Its function is as follows. Dual specificity protein phosphatase; active with phosphotyrosine, phosphoserine and phosphothreonine residues. The highest relative activity is toward ERK1. In Rattus norvegicus (Rat), this protein is Dual specificity protein phosphatase 5 (Dusp5).